The following is a 92-amino-acid chain: Small ribosomal subunit protein uS19 (92 aa).

Belongs to the universal ribosomal protein uS19 family.

Functionally, protein S19 forms a complex with S13 that binds strongly to the 16S ribosomal RNA. The chain is Small ribosomal subunit protein uS19 from Photobacterium profundum (strain SS9).